The following is a 367-amino-acid chain: Embryonic developmental protein tofu-6 (367 aa).

In terms of domain architecture, RRM spans 13 to 92 (AGFHIRNIPK…FTLKVTDHKN (80 aa)). The interval 298 to 345 (KSILADRLQRKGVCEYLPRSQQPHYAYSRETLLQHNNSGVTAQISNDA) is required for ife-3 interaction.

As to quaternary structure, component of the pid-1 variant of the PETISCO complex (also called the pid-3, erh-2, tofu-6, and ife-3 small RNA complex) containing at least pid-1, tofu-6, ife-3, pid-3, and erh-2, which is required for the biogenesis of 21 nucleotide PIWI-interacting RNAs (piRNAs) that possess a uracil residue at the 5'-end (also called 21U-RNAs). Within the pid-1 variant of the PETISCO complex interacts with pid-1. Component of the tost-1 variant of the PETISCO complex (also called the pid-3, erh-2, tofu-6, and ife-3 small RNA complex) containing at least tost-1, tofu-6, ife-3, pid-3, and erh-2, which plays an essential role in embryogenesis. Within the tost-1 variant of the PETISCO complex interacts with tost-1. Within the pid-1 and tost-1 variants of the PETISCO complexes interacts (via C-terminus) with ife-3. Within the pid-1 and tost-1 variants of the PETISCO complexes interacts (via the RRM domain) with pid-3. Within the pid-1 and tost-1 variants of the PETISCO complexes interacts (via the RRM domain) with erh-2. In contrast to the pid-1 variant of the PETISCO complex, the tost-1 variant of the PETISCO complex plays a minor role in the biogenesis of 21U-RNAs. Interacts (via residues 120-314) with the PUCH complex subunit tofu-1 (via residues 82-172); the interaction between the PETISCO and PUCH complex members enhances piRNA production in vivo. As to expression, expression is restricted to the germline (at protein level).

The protein resides in the cytoplasm. The protein localises to the perinuclear region. It is found in the nucleus. Its function is as follows. Component of the pid-1 and tost-1 variants of the PETISCO complexes, which have roles in the biogenesis of a class of 21 nucleotide PIWI-interacting RNAs (piRNAs) that possess a uracil residue at the 5'-end (also called 21U-RNAs) and embryogenesis, respectively. Promotes the biogenesis of 21U-RNAs. Mediates the interaction between the PETISCO complex and the PUCH complex, the endoribonuclease complex processing the 5'-end of precursor piRNAs, thereby enhancing mature piRNA production. Required for chromosome segregation and cell division in early embryos. May have a role in DNA replication. The sequence is that of Embryonic developmental protein tofu-6 from Caenorhabditis elegans.